The sequence spans 89 residues: Small ribosomal subunit protein uS17 (89 aa).

This sequence belongs to the universal ribosomal protein uS17 family. Part of the 30S ribosomal subunit.

Functionally, one of the primary rRNA binding proteins, it binds specifically to the 5'-end of 16S ribosomal RNA. This is Small ribosomal subunit protein uS17 from Coxiella burnetii (strain RSA 331 / Henzerling II).